A 2555-amino-acid chain; its full sequence is Squalestatin hexaketide synthase clz14 (2555 aa).

The disordered stretch occupies residues M1–T84. Positions H10 to T84 are enriched in low complexity. In terms of domain architecture, Ketosynthase family 3 (KS3) spans Q91–S511. Catalysis depends on for beta-ketoacyl synthase activity residues C261, H398, and H435. The tract at residues F611–F928 is malonyl-CoA:ACP transacylase (MAT) domain. An N-terminal hotdog fold region spans residues H975–S1104. The tract at residues H975–D1256 is dehydratase (DH) domain. Residues H975–Q1260 enclose the PKS/mFAS DH domain. H1007 serves as the catalytic Proton acceptor; for dehydratase activity. Positions S1117–Q1260 are C-terminal hotdog fold. D1177 functions as the Proton donor; for dehydratase activity in the catalytic mechanism. The tract at residues S1424–L1595 is methyltransferase (CMet) domain. The tract at residues G1821–V2141 is enoyl reductase (ER) (ER) domain. Residues S2165–I2338 are ketoreductase (KR) domain. Residues I2468–L2546 form the Carrier domain. S2505 is modified (O-(pantetheine 4'-phosphoryl)serine).

It functions in the pathway secondary metabolite biosynthesis. Highly reducing polyketide synthase (HR-PKS); part of the gene cluster that mediates the biosynthesis of squalestatin S1 (SQS1, also known as zaragozic acid A), a heavily oxidized fungal polyketide that offers potent cholesterol lowering activity by targeting squalene synthase (SS). SQS1 is composed of a 2,8-dioxobicyclic[3.2.1]octane-3,4,5-tricarboxyclic acid core that is connected to two lipophilic polyketide arms. These initial steps feature the priming of an unusual benzoic acid starter unit onto the highly reducing polyketide synthase clz14, followed by oxaloacetate extension and product release to generate a tricarboxylic acid containing product. The phenylalanine ammonia lyase (PAL) clz10 and the acyl-CoA ligase clz12 are involved in transforming phenylalanine into benzoyl-CoA. The citrate synthase-like protein clz17 is involved in connecting the C-alpha-carbons of the hexaketide chain and oxaloacetate to afford the tricarboxylic acid unit. The potential hydrolytic enzymes, clz11 and clz13, are in close proximity to pks2 and may participate in product release. On the other side, the tetraketide arm is synthesized by a the squalestatin tetraketide synthase clz2 and enzymatically esterified to the core in the last biosynthetic step, by the acetyltransferase clz6. The biosynthesis of the tetraketide must involve 3 rounds of chain extension. After the first and second rounds methyl-transfer occurs, and in all rounds of extension the ketoreductase and dehydratase are active. The enoyl reductase and C-MeT of clz2 are not active in the final round of extension. The acetyltransferase clz6 appears to have a broad substrate selectivity for its acyl CoA substrate, allowing the in vitro synthesis of novel squalestatins. The biosynthesis of SQS1 requires several oxidative steps likely performed by oxidoreductases clz3, clz15 and clz16. Finally, in support of the identification of the cluster as being responsible for SQS1 production, the cluster contains a gene encoding a putative squalene synthase (SS) clz20, suggesting a likely mechanism for self-resistance. This chain is Squalestatin hexaketide synthase clz14, found in Cochliobolus lunatus (Filamentous fungus).